The sequence spans 175 residues: Coagulogen (175 aa).

8 disulfide bridges follow: C8–C167, C10–C95, C60–C161, C65–C121, C75–C168, C88–C140, C127–C170, and C134–C172.

Belongs to the coagulin family. As to quaternary structure, coagulogen is cleaved after Arg-18 and Arg-46 by a clotting enzyme contained in the hemocyte and activated by a bacterial endotoxin (lipopolysaccharide). This cleavage releases the peptide C and leaves 2 chains of coagulin, A and B, linked by two disulfide bonds. Coagulin molecules interlink to form a gel. In terms of tissue distribution, hemolymph.

It is found in the secreted. Its function is as follows. Coagulogen is a gel-forming protein of hemolymph; it hinders the spread of invaders by immobilizing them. This is Coagulogen from Carcinoscorpius rotundicauda (Mangrove horseshoe crab).